The chain runs to 385 residues: MKVAYFDCFAGIAGDMTVAALIELGLPLEVLRQELAGLPFSGYTLESRKVERHGVAGTSFKVTLTEADQPHRHYSGIAKMIEASGLKPRVKELAQRIFRRLAEAEAAVHGVPLERVHFHEVGAVDSIVDIVGTAIGLDYLGVEALYASGLPYGRGFVQTAHGRLPVPAPATAELMEGIPLTADIGEGERVTPTGAAIIAALADGFGPPPPMTPLGTGYGAGEKDFPELPNLLRVLLGESTEAKGHQEVLVIETHIDDMNPEIFGFLMERLLEAGALDVAFSPLQMKKNRPATCLTVIADPADLEKLSAIVLSESTAIGLRYYPARRVTAARSLETRETTLGEVAVKVLETGRVTPEYDSCRRIALEKGIPLIEVYRTVERECGQA.

It belongs to the LarC family.

The protein is Putative nickel insertion protein of Citrifermentans bemidjiense (strain ATCC BAA-1014 / DSM 16622 / JCM 12645 / Bem) (Geobacter bemidjiensis).